The primary structure comprises 198 residues: Putative pseudouridine methyltransferase (198 aa).

Met132 and Cys186 together coordinate S-adenosyl-L-methionine.

It belongs to the methyltransferase superfamily. TrmY family.

It localises to the cytoplasm. The chain is Putative pseudouridine methyltransferase from Photobacterium profundum (strain SS9).